Here is a 175-residue protein sequence, read N- to C-terminus: ATP synthase subunit b (175 aa).

The helical transmembrane segment at 20-40 threads the bilayer; it reads LIFWTAVTFVIVLVILKKIAW.

This sequence belongs to the ATPase B chain family. F-type ATPases have 2 components, F(1) - the catalytic core - and F(0) - the membrane proton channel. F(1) has five subunits: alpha(3), beta(3), gamma(1), delta(1), epsilon(1). F(0) has four main subunits: a(1), b(2) and c(10-14). The alpha and beta chains form an alternating ring which encloses part of the gamma chain. F(1) is attached to F(0) by a central stalk formed by the gamma and epsilon chains, while a peripheral stalk is formed by the delta and b chains.

The protein resides in the cell inner membrane. In terms of biological role, f(1)F(0) ATP synthase produces ATP from ADP in the presence of a proton or sodium gradient. F-type ATPases consist of two structural domains, F(1) containing the extramembraneous catalytic core and F(0) containing the membrane proton channel, linked together by a central stalk and a peripheral stalk. During catalysis, ATP synthesis in the catalytic domain of F(1) is coupled via a rotary mechanism of the central stalk subunits to proton translocation. Component of the F(0) channel, it forms part of the peripheral stalk, linking F(1) to F(0). The chain is ATP synthase subunit b from Chlorobaculum parvum (strain DSM 263 / NCIMB 8327) (Chlorobium vibrioforme subsp. thiosulfatophilum).